The primary structure comprises 420 residues: Histidine--tRNA ligase (420 aa).

It belongs to the class-II aminoacyl-tRNA synthetase family. Homodimer.

It is found in the cytoplasm. It catalyses the reaction tRNA(His) + L-histidine + ATP = L-histidyl-tRNA(His) + AMP + diphosphate + H(+). This Saccharopolyspora erythraea (strain ATCC 11635 / DSM 40517 / JCM 4748 / NBRC 13426 / NCIMB 8594 / NRRL 2338) protein is Histidine--tRNA ligase.